A 346-amino-acid polypeptide reads, in one-letter code: Biotin synthase (346 aa).

Residues 38-256 (RQVQVSTLLS…IAVARIMMPT (219 aa)) form the Radical SAM core domain. Residues Cys53, Cys57, and Cys60 each contribute to the [4Fe-4S] cluster site. 4 residues coordinate [2Fe-2S] cluster: Cys97, Cys128, Cys188, and Arg260.

It belongs to the radical SAM superfamily. Biotin synthase family. Homodimer. [4Fe-4S] cluster is required as a cofactor. The cofactor is [2Fe-2S] cluster.

The enzyme catalyses (4R,5S)-dethiobiotin + (sulfur carrier)-SH + 2 reduced [2Fe-2S]-[ferredoxin] + 2 S-adenosyl-L-methionine = (sulfur carrier)-H + biotin + 2 5'-deoxyadenosine + 2 L-methionine + 2 oxidized [2Fe-2S]-[ferredoxin]. It participates in cofactor biosynthesis; biotin biosynthesis; biotin from 7,8-diaminononanoate: step 2/2. Functionally, catalyzes the conversion of dethiobiotin (DTB) to biotin by the insertion of a sulfur atom into dethiobiotin via a radical-based mechanism. The chain is Biotin synthase from Escherichia coli (strain K12 / DH10B).